An 89-amino-acid chain; its full sequence is Small ribosomal subunit protein uS17 (89 aa).

Belongs to the universal ribosomal protein uS17 family. As to quaternary structure, part of the 30S ribosomal subunit.

Functionally, one of the primary rRNA binding proteins, it binds specifically to the 5'-end of 16S ribosomal RNA. This Coxiella burnetii (strain RSA 331 / Henzerling II) protein is Small ribosomal subunit protein uS17.